We begin with the raw amino-acid sequence, 347 residues long: Ribosomal RNA small subunit methyltransferase C (347 aa).

It belongs to the methyltransferase superfamily. RsmC family. In terms of assembly, monomer.

The protein resides in the cytoplasm. The catalysed reaction is guanosine(1207) in 16S rRNA + S-adenosyl-L-methionine = N(2)-methylguanosine(1207) in 16S rRNA + S-adenosyl-L-homocysteine + H(+). Specifically methylates the guanine in position 1207 of 16S rRNA in the 30S particle. The sequence is that of Ribosomal RNA small subunit methyltransferase C from Shewanella baltica (strain OS185).